Here is a 249-residue protein sequence, read N- to C-terminus: 1-(5-phosphoribosyl)-5-[(5-phosphoribosylamino)methylideneamino] imidazole-4-carboxamide isomerase (249 aa).

The Proton acceptor role is filled by Asp-11. The active-site Proton donor is Asp-133.

It belongs to the HisA/HisF family.

The protein resides in the cytoplasm. The catalysed reaction is 1-(5-phospho-beta-D-ribosyl)-5-[(5-phospho-beta-D-ribosylamino)methylideneamino]imidazole-4-carboxamide = 5-[(5-phospho-1-deoxy-D-ribulos-1-ylimino)methylamino]-1-(5-phospho-beta-D-ribosyl)imidazole-4-carboxamide. It functions in the pathway amino-acid biosynthesis; L-histidine biosynthesis; L-histidine from 5-phospho-alpha-D-ribose 1-diphosphate: step 4/9. This Actinobacillus succinogenes (strain ATCC 55618 / DSM 22257 / CCUG 43843 / 130Z) protein is 1-(5-phosphoribosyl)-5-[(5-phosphoribosylamino)methylideneamino] imidazole-4-carboxamide isomerase.